Consider the following 132-residue polypeptide: Small ribosomal subunit protein uS8 (132 aa).

This sequence belongs to the universal ribosomal protein uS8 family. In terms of assembly, part of the 30S ribosomal subunit. Contacts proteins S5 and S12.

Its function is as follows. One of the primary rRNA binding proteins, it binds directly to 16S rRNA central domain where it helps coordinate assembly of the platform of the 30S subunit. This chain is Small ribosomal subunit protein uS8, found in Bacillus velezensis (strain DSM 23117 / BGSC 10A6 / LMG 26770 / FZB42) (Bacillus amyloliquefaciens subsp. plantarum).